A 1013-amino-acid polypeptide reads, in one-letter code: Poly [ADP-ribose] polymerase 1 (1013 aa).

An N-acetylalanine modification is found at alanine 2. Residues 9–93 (YRVQYAKSGR…KVKKTAEAGG (85 aa)) form a PARP-type 1 zinc finger. Cysteine 21 and cysteine 24 together coordinate Zn(2+). Serine 41 bears the Phosphoserine mark. The Zn(2+) site is built by histidine 53 and cysteine 56. Residues lysine 97 and lysine 105 each carry the N6-acetyllysine modification. The PARP-type 2 zinc finger occupies 113 to 203 (FAAEYAKSNR…ALKKQLPAIK (91 aa)). Cysteine 125 and cysteine 128 together coordinate Zn(2+). An N6-acetyllysine modification is found at lysine 131. Residues histidine 159 and cysteine 162 each coordinate Zn(2+). Serine 177, serine 179, and serine 185 each carry phosphoserine. Lysine 192 participates in a covalent cross-link: Glycyl lysine isopeptide (Lys-Gly) (interchain with G-Cter in SUMO2). The disordered stretch occupies residues 200-226 (PAIKNEGKRKGDEVDGTDEVAKKKSRK). Lysine 203 participates in a covalent cross-link: Glycyl lysine isopeptide (Lys-Gly) (interchain with G-Cter in SUMO1); alternate. Lysine 203 participates in a covalent cross-link: Glycyl lysine isopeptide (Lys-Gly) (interchain with G-Cter in SUMO2); alternate. The segment covering 204–226 (NEGKRKGDEVDGTDEVAKKKSRK) has biased composition (basic and acidic residues). 2 consecutive short sequence motifs (nuclear localization signal) follow at residues 207-209 (KRK) and 221-226 (KKKSRK). The 135-residue stretch at 225 to 359 (RKETDKYSKL…VKKQDRIFPP (135 aa)) folds into the PADR1 zinc-binding domain. A Glycyl lysine isopeptide (Lys-Gly) (interchain with G-Cter in SUMO2) cross-link involves residue lysine 249. Phosphoserine occurs at positions 274 and 277. Positions 290-332 (GALLPCKECSGQLVFKSDAYYCTGDVTAWTKCMVKTQNPSRKE) are zinc ribbon. The Zn(2+) site is built by cysteine 295, cysteine 298, cysteine 311, and cysteine 321. The segment at 373 to 523 (VTSAPTAVNS…GVNKSEKRMK (151 aa)) is automodification domain. The BRCT domain occupies 385–476 (PADKPLSNMK…KSLQDLLSAH (92 aa)). Aspartate 387 is subject to PolyADP-ribosyl aspartic acid. A polyADP-ribosyl glutamic acid mark is found at glutamate 407, glutamate 413, glutamate 435, glutamate 437, glutamate 444, glutamate 445, glutamate 448, and glutamate 456. Residue lysine 467 forms a Glycyl lysine isopeptide (Lys-Gly) (interchain with G-Cter in SUMO2) linkage. The residue at position 484 (glutamate 484) is a PolyADP-ribosyl glutamic acid. Lysine 486 is covalently cross-linked (Glycyl lysine isopeptide (Lys-Gly) (interchain with G-Cter in SUMO1); alternate). Residue lysine 486 forms a Glycyl lysine isopeptide (Lys-Gly) (interchain with G-Cter in SUMO2); alternate linkage. PolyADP-ribosyl glutamic acid occurs at positions 488 and 491. The interval 489–508 (PGEVVAPRGKSAAPSKKSKG) is disordered. Positions 494–503 (APRGKSAAPS) are enriched in low complexity. An ADP-ribosylserine mark is found at serine 499, serine 503, and serine 506. Residue lysine 511 forms a Glycyl lysine isopeptide (Lys-Gly) (interchain with G-Cter in SUMO2) linkage. 2 positions are modified to polyADP-ribosyl glutamic acid: glutamate 512 and glutamate 513. Residue serine 518 is modified to ADP-ribosylserine. Residue glutamate 519 is modified to PolyADP-ribosyl glutamic acid. The residue at position 520 (lysine 520) is an N6-(ADP-ribosyl)lysine. A Glycyl lysine isopeptide (Lys-Gly) (interchain with G-Cter in SUMO2) cross-link involves residue lysine 527. In terms of domain architecture, WGR spans 541–637 (SAHVLEKGGK…KNFTKYPKKF (97 aa)). A Phosphothreonine modification is found at threonine 593. Residues lysine 599 and lysine 620 each carry the N6-acetyllysine modification. Residues 661 to 778 (KSKLPKPVQE…DIEVAYSLLR (118 aa)) enclose the PARP alpha-helical domain. Residue lysine 747 forms a Glycyl lysine isopeptide (Lys-Gly) (interchain with G-Cter in SUMO1); alternate linkage. Lysine 747 is covalently cross-linked (Glycyl lysine isopeptide (Lys-Gly) (interchain with G-Cter in SUMO2); alternate). Phosphoserine occurs at positions 781 and 785. A PARP catalytic domain is found at 787-1013 (DPIDVNYEKL…LKFNFKTSLW (227 aa)). Residues 861 to 863 (HGS), glycine 870, arginine 877, and serine 903 each bind NAD(+). The active-site For poly [ADP-ribose] polymerase activity is the glutamate 987.

It belongs to the ARTD/PARP family. As to quaternary structure, homodimer; PARP-type zinc-fingers from separate PARP1 molecules form a dimer module that specifically recognizes DNA strand breaks. Heterodimer; heterodimerizes with PARP2. Interacts (via the PARP catalytic domain) with HPF1. Interacts with NMNAT1. Interacts with nucleosomes; with a preference for nucleosomes containing H2A.X. Interacts with APTX. Component of a base excision repair (BER) complex, containing at least XRCC1, PARP1, PARP2, POLB and LRIG3. Interacts with SRY. The SWAP complex consists of NPM1, NCL, PARP1 and SWAP70. Interacts with TIAM2. Interacts with PARP3; leading to activate PARP1 in absence of DNA. Interacts (when poly-ADP-ribosylated) with CHD1L (via macro domain). Interacts with the DNA polymerase alpha catalytic subunit POLA1; this interaction functions as part of the control of replication fork progression. Interacts with EEF1A1 and TXK. Interacts with RNF4. Interacts with RNF146. Interacts with ZNF423. Interacts with APLF. Interacts with SNAI1 (via zinc fingers); the interaction requires SNAI1 to be poly-ADP-ribosylated and non-phosphorylated (active) by GSK3B. Interacts (when poly-ADP-ribosylated) with PARP9. Interacts with NR4A3; activates PARP1 by improving acetylation of PARP1 and suppressing the interaction between PARP1 and SIRT1. Interacts (via catalytic domain) with PUM3; the interaction inhibits the poly-ADP-ribosylation activity of PARP1 and the degradation of PARP1 by CASP3 following genotoxic stress. Interacts with ZNF365. Interacts with RRP1B. Interacts with TIMELESS; the interaction is direct. Interacts with CGAS; leading to impede the formation of the PARP1-TIMELESS complex. Interacts with KHDC3L, the interaction is increased following the formation of DNA double-strand breaks. Interacts (when auto-poly-ADP-ribosylated) with XRCC1; leading to inhibit PARP1 ADP-ribosyltransferase activity. Interacts with SPINDOC; promoting PARP1 ADP-ribosyltransferase activity. Interacts with BANF1; leading to inhibit PARP1 ADP-ribosyltransferase activity in response to oxidative DNA damage. Interacts (when sumoylated and ubiquitinated) with VCP/p97; leading to its extraction from chromatin. Interacts with YARS1; promoting PARP1 ADP-ribosyltransferase activity. Interacts with PACMP micropeptide; Interacts with PACMP micropeptide; interaction. Interacts (when poly-ADP-ribosylated) with isoform 1 of MACROH2A1; MACROH2A1 specifically binds to poly-ADP-ribose chains and inhibits PARP1 activity, limiting the consumption of nuclear NAD(+). Interacts with CARM1; promoting recruitment to replication forks. Interacts with RECQL. Interacts with ZNF32; the interaction reshapes ZNF432 interacting proteins. Interacts with TPRN; TPRN interacts with a number of DNA damage response proteins, is recruited to sites of DNA damage and may play a role in DNA damage repair. Interacts (when auto-poly-ADP-ribosylated) with AIFM1. Poly-ADP-ribosylated on serine, glutamate and aspartate residues by autocatalysis. Auto-ADP-ribosylation on serine takes place following interaction with HPF1. Auto poly-ADP-ribosylation on serine residues promotes its dissociation from chromatin. Poly-ADP-ribosylated by PARP2; poly-ADP-ribosylation mediates the recruitment of CHD1L to DNA damage sites. Mono-ADP-ribosylated at Lys-520 by SIRT6 in response to oxidative stress, promoting recruitment to double-strand breaks (DSBs) sites. In terms of processing, S-nitrosylated, leading to inhibit transcription regulation activity. Post-translationally, phosphorylated at Thr-593 by PRKDC in response to DNA damage following virus infection, promoting its translocation to the cytosol. Phosphorylated by TXK. Proteolytically cleaved by caspase-3 (CASP3) and caspase-7 (CASP7) in response to apoptosis to generate the Poly [ADP-ribose] polymerase 1, processed N-terminus and Poly [ADP-ribose] polymerase 1, processed C-terminus forms. In terms of processing, sumoylated with SUMO1 or SUMO2 by PIAS4 following prolonged residence (trapping) to chromatin. Sumoylation promotes ubiquitination by RNF4 and removal from chromatin by VCP/p97. Post-translationally, ubiquitinated by RNF4 following sumoylation by PIAS4 in response to prolonged residence (trapping) to chromatin. Ubiquitination promotes removal from chromatin by VCP/p97. In terms of tissue distribution, widely expressed. Expression is correlated with proliferation, with higher levels occurring during early fetal development and organogenesis and in the highly proliferative cell compartments of adult. Expressed in B-cells that have been induced to switch to various Ig isotypes.

Its subcellular location is the chromosome. It is found in the nucleus. The protein localises to the nucleolus. The protein resides in the cytoplasm. It localises to the cytosol. The catalysed reaction is NAD(+) + (ADP-D-ribosyl)n-acceptor = nicotinamide + (ADP-D-ribosyl)n+1-acceptor + H(+).. It catalyses the reaction L-seryl-[protein] + NAD(+) = O-(ADP-D-ribosyl)-L-seryl-[protein] + nicotinamide + H(+). It carries out the reaction L-aspartyl-[protein] + NAD(+) = 4-O-(ADP-D-ribosyl)-L-aspartyl-[protein] + nicotinamide. The enzyme catalyses L-glutamyl-[protein] + NAD(+) = 5-O-(ADP-D-ribosyl)-L-glutamyl-[protein] + nicotinamide. The catalysed reaction is L-tyrosyl-[protein] + NAD(+) = O-(ADP-D-ribosyl)-L-tyrosyl-[protein] + nicotinamide + H(+). It catalyses the reaction L-histidyl-[protein] + NAD(+) = N(tele)-(ADP-D-ribosyl)-L-histidyl-[protein] + nicotinamide + H(+). Its activity is regulated as follows. ADP-ribosyltransferase activity is regulated via an allosteric activation mechanism. In absence of activation signal, PARP1 is autoinhibited by the PARP alpha-helical domain (also named HD region), which prevents effective NAD(+)-binding. Activity is highly stimulated by signals, such as DNA strand breaks. Binding to damaged DNA unfolds the PARP alpha-helical domain, relieving autoinhibition. Poly-ADP-ribosyltransferase activity is tightly regulated and PARP1 is removed from damaged chromatin following initial poly-ADP-ribosylation of chromatin to avoid prolonged residence (trapping) that has cytotoxic consequences. A number of factors (VCP/p97) or post-translational modifications (auto-poly-ADP-ribosylation or ubiquitination) promote PARP1 removal from chromatin. Its function is as follows. Poly-ADP-ribosyltransferase that mediates poly-ADP-ribosylation of proteins and plays a key role in DNA repair. Mediates glutamate, aspartate, serine, histidine or tyrosine ADP-ribosylation of proteins: the ADP-D-ribosyl group of NAD(+) is transferred to the acceptor carboxyl group of target residues and further ADP-ribosyl groups are transferred to the 2'-position of the terminal adenosine moiety, building up a polymer with an average chain length of 20-30 units. Serine ADP-ribosylation of proteins constitutes the primary form of ADP-ribosylation of proteins in response to DNA damage. Specificity for the different amino acids is conferred by interacting factors, such as HPF1 and NMNAT1. Following interaction with HPF1, catalyzes serine ADP-ribosylation of target proteins; HPF1 confers serine specificity by completing the PARP1 active site. Also catalyzes tyrosine ADP-ribosylation of target proteins following interaction with HPF1. Following interaction with NMNAT1, catalyzes glutamate and aspartate ADP-ribosylation of target proteins; NMNAT1 confers glutamate and aspartate specificity. PARP1 initiates the repair of DNA breaks: recognizes and binds DNA breaks within chromatin and recruits HPF1, licensing serine ADP-ribosylation of target proteins, such as histones (H2BS6ADPr and H3S10ADPr), thereby promoting decompaction of chromatin and the recruitment of repair factors leading to the reparation of DNA strand breaks. HPF1 initiates serine ADP-ribosylation but restricts the polymerase activity of PARP1 in order to limit the length of poly-ADP-ribose chains. In addition to base excision repair (BER) pathway, also involved in double-strand breaks (DSBs) repair: together with TIMELESS, accumulates at DNA damage sites and promotes homologous recombination repair by mediating poly-ADP-ribosylation. Mediates the poly-ADP-ribosylation of a number of proteins, including itself, APLF, CHFR and NFAT5. In addition to proteins, also able to ADP-ribosylate DNA: catalyzes ADP-ribosylation of DNA strand break termini containing terminal phosphates and a 2'-OH group in single- and double-stranded DNA, respectively. Required for PARP9 and DTX3L recruitment to DNA damage sites. PARP1-dependent PARP9-DTX3L-mediated ubiquitination promotes the rapid and specific recruitment of 53BP1/TP53BP1, UIMC1/RAP80, and BRCA1 to DNA damage sites. PARP1-mediated DNA repair in neurons plays a role in sleep: senses DNA damage in neurons and promotes sleep, facilitating efficient DNA repair. In addition to DNA repair, also involved in other processes, such as transcription regulation, programmed cell death, membrane repair, adipogenesis and innate immunity. Acts as a repressor of transcription: binds to nucleosomes and modulates chromatin structure in a manner similar to histone H1, thereby altering RNA polymerase II. Acts both as a positive and negative regulator of transcription elongation, depending on the context. Acts as a positive regulator of transcription elongation by mediating poly-ADP-ribosylation of NELFE, preventing RNA-binding activity of NELFE and relieving transcription pausing. Acts as a negative regulator of transcription elongation in response to DNA damage by catalyzing poly-ADP-ribosylation of CCNT1, disrupting the phase separation activity of CCNT1 and subsequent activation of CDK9. Involved in replication fork progression following interaction with CARM1: mediates poly-ADP-ribosylation at replication forks, slowing fork progression. Poly-ADP-ribose chains generated by PARP1 also play a role in poly-ADP-ribose-dependent cell death, a process named parthanatos. Also acts as a negative regulator of the cGAS-STING pathway. Acts by mediating poly-ADP-ribosylation of CGAS: PARP1 translocates into the cytosol following phosphorylation by PRKDC and catalyzes poly-ADP-ribosylation and inactivation of CGAS. Acts as a negative regulator of adipogenesis: catalyzes poly-ADP-ribosylation of histone H2B on 'Glu-35' (H2BE35ADPr) following interaction with NMNAT1, inhibiting phosphorylation of H2B at 'Ser-36' (H2BS36ph), thereby blocking expression of pro-adipogenetic genes. Involved in the synthesis of ATP in the nucleus, together with NMNAT1, PARG and NUDT5. Nuclear ATP generation is required for extensive chromatin remodeling events that are energy-consuming. In terms of biological role, promotes AIFM1-mediated apoptosis. This form, which translocates into the cytoplasm following cleavage by caspase-3 (CASP3) and caspase-7 (CASP7) in response to apoptosis, is auto-poly-ADP-ribosylated and serves as a poly-ADP-ribose carrier to induce AIFM1-mediated apoptosis. Functionally, this cleavage form irreversibly binds to DNA breaks and interferes with DNA repair, promoting DNA damage-induced apoptosis. This chain is Poly [ADP-ribose] polymerase 1 (Parp1), found in Mus musculus (Mouse).